The following is a 443-amino-acid chain: Acid phosphatase type 7 (443 aa).

Positions 1-23 (MAAAPPPPPPLLLLLLCVCAVFA) are cleaved as a signal peptide. N-linked (GlcNAc...) asparagine glycosylation is found at asparagine 53, asparagine 76, and asparagine 126. Fe cation-binding residues include aspartate 140, aspartate 169, and tyrosine 172. Aspartate 169 provides a ligand contact to Zn(2+). Residue asparagine 204 participates in Zn(2+) binding. N-linked (GlcNAc...) asparagine glycosylation is present at asparagine 210. Zn(2+) is bound at residue histidine 288. A glycan (N-linked (GlcNAc...) asparagine) is linked at asparagine 313. Histidine 338 serves as a coordination point for Zn(2+). Histidine 340 contributes to the Fe cation binding site. N-linked (GlcNAc...) asparagine glycans are attached at residues asparagine 355 and asparagine 409.

Belongs to the metallophosphoesterase superfamily. Purple acid phosphatase family. It depends on Fe cation as a cofactor. Zn(2+) is required as a cofactor.

It localises to the secreted. The catalysed reaction is a phosphate monoester + H2O = an alcohol + phosphate. This chain is Acid phosphatase type 7, found in Danio rerio (Zebrafish).